The sequence spans 711 residues: L-type lectin-domain containing receptor kinase VIII.2 (711 aa).

Positions 1–30 (MLKLPPRFFSVYSTLIHILASFLCSSDVRG) are cleaved as a signal peptide. Residues 31–315 (DFPATRFDLG…NKLCKKSPAA (285 aa)) are Extracellular-facing. The legume-lectin like stretch occupies residues 35–260 (TRFDLGTLTL…IHSVDWWSFS (226 aa)). N57 carries N-linked (GlcNAc...) asparagine glycosylation. A disordered region spans residues 265–306 (ESSESPPPMPNSPPPSSPSSSITPSLSTVRRKTADPSSSCRN). Residues 269-281 (SPPPMPNSPPPSS) are compositionally biased toward pro residues. Over residues 282 to 291 (PSSSITPSLS) the composition is skewed to low complexity. The helical transmembrane segment at 316–336 (VAGVVTAGAFFLALFAGVIIW) threads the bilayer. The Cytoplasmic portion of the chain corresponds to 337–711 (VYSKKIKYTR…IFIVGKDRSV (375 aa)). One can recognise a Protein kinase domain in the interval 374 to 656 (FSSSRVIGNG…LVGEADVPEV (283 aa)). Residues 380–388 (IGNGAFGTV) and K403 each bind ATP. Residue D497 is the Proton acceptor of the active site.

The protein in the C-terminal section; belongs to the protein kinase superfamily. Ser/Thr protein kinase family. In the N-terminal section; belongs to the leguminous lectin family.

Its subcellular location is the cell membrane. It catalyses the reaction L-seryl-[protein] + ATP = O-phospho-L-seryl-[protein] + ADP + H(+). The catalysed reaction is L-threonyl-[protein] + ATP = O-phospho-L-threonyl-[protein] + ADP + H(+). In terms of biological role, involved in resistance response to the pathogenic oomycetes Phytophthora infestans and Phytophthora capsici. This is L-type lectin-domain containing receptor kinase VIII.2 from Arabidopsis thaliana (Mouse-ear cress).